The following is a 212-amino-acid chain: MKNGILISLEGPEGAGKSSVLEALLPFLQNYGTGLITTREPGGVQIAEAIREVILEPSHTAMDAKTELLLYIASRRQHLTERVLPALAQGKLVLMDRFIDSSVAYQGYGRGLDVADIEWLNQFATDGLKPDLTLYFDIDVEEGLARIAKSESREVNRLDLEGLDLHQRVRQGYLAILDKEPERFVKVDASQPLDKVVADSLAIIQERFGNPS.

11 to 18 (GPEGAGKS) contacts ATP.

The protein belongs to the thymidylate kinase family.

It catalyses the reaction dTMP + ATP = dTDP + ADP. Functionally, phosphorylation of dTMP to form dTDP in both de novo and salvage pathways of dTTP synthesis. The polypeptide is Thymidylate kinase (Streptococcus sanguinis (strain SK36)).